We begin with the raw amino-acid sequence, 151 residues long: 3-hydroxyacyl-[acyl-carrier-protein] dehydratase FabZ (151 aa).

The active site involves H54.

This sequence belongs to the thioester dehydratase family. FabZ subfamily.

It localises to the cytoplasm. The enzyme catalyses a (3R)-hydroxyacyl-[ACP] = a (2E)-enoyl-[ACP] + H2O. In terms of biological role, involved in unsaturated fatty acids biosynthesis. Catalyzes the dehydration of short chain beta-hydroxyacyl-ACPs and long chain saturated and unsaturated beta-hydroxyacyl-ACPs. The sequence is that of 3-hydroxyacyl-[acyl-carrier-protein] dehydratase FabZ from Klebsiella pneumoniae (strain 342).